Reading from the N-terminus, the 262-residue chain is Hydroxyacylglutathione hydrolase (262 aa).

Zn(2+)-binding residues include His53, His55, Asp57, His58, His111, Asp128, and His166.

Belongs to the metallo-beta-lactamase superfamily. Glyoxalase II family. As to quaternary structure, monomer. Zn(2+) serves as cofactor.

It carries out the reaction an S-(2-hydroxyacyl)glutathione + H2O = a 2-hydroxy carboxylate + glutathione + H(+). It functions in the pathway secondary metabolite metabolism; methylglyoxal degradation; (R)-lactate from methylglyoxal: step 2/2. Its function is as follows. Thiolesterase that catalyzes the hydrolysis of S-D-lactoyl-glutathione to form glutathione and D-lactic acid. In Nitrosomonas europaea (strain ATCC 19718 / CIP 103999 / KCTC 2705 / NBRC 14298), this protein is Hydroxyacylglutathione hydrolase.